Consider the following 65-residue polypeptide: Large ribosomal subunit protein bL35 (65 aa).

It belongs to the bacterial ribosomal protein bL35 family.

The protein is Large ribosomal subunit protein bL35 of Syntrophobacter fumaroxidans (strain DSM 10017 / MPOB).